Reading from the N-terminus, the 929-residue chain is Facilitated trehalose transporter Tret1 (929 aa).

The tract at residues 1 to 275 (MSGRDNRAAG…VGYQQQKATS (275 aa)) is disordered. Topologically, residues 1 to 462 (MSGRDNRAAG…LEVYRPTTNP (462 aa)) are cytoplasmic. Positions 10-26 (GAGGGSGGGGGGGGGGG) are enriched in gly residues. Positions 41–59 (KLKEKLTRAGEELGYHRVE) are enriched in basic and acidic residues. The segment covering 60 to 72 (SNLSASNTATSLD) has biased composition (polar residues). Low complexity-rich tracts occupy residues 85 to 141 (AAPQ…QPLR), 168 to 178 (QEIQQQQLQQQ), and 237 to 254 (SNSN…VAAD). A phosphoserine mark is found at serine 320, serine 321, and serine 322. Residues 352–371 (VLHGSSTDSDEEGEDAEHKR) form a disordered region. Serine 392 and serine 394 each carry phosphoserine. Residues 398 to 420 (FLSSRQNFQQQRSISTDSRKSRR) form a disordered region. The segment covering 402-413 (RQNFQQQRSIST) has biased composition (polar residues). A helical transmembrane segment spans residues 463-483 (IYIWTQVLAALSVSLGSLVVG). Residues 484–512 (FSSAYTSPALVSMTDRNLTSFDVSTEDAS) are Extracellular-facing. The N-linked (GlcNAc...) asparagine glycan is linked to asparagine 500. Residues 513–533 (WVGGIMPLAGLAGGIAGGPLI) traverse the membrane as a helical segment. The Cytoplasmic portion of the chain corresponds to 534 to 541 (EYLGRRNT). A helical transmembrane segment spans residues 542 to 562 (ILATAVPFIISWLLIACAVNV). Topologically, residues 563-569 (PMVLSGR) are extracellular. The chain crosses the membrane as a helical span at residues 570–590 (FLAGFCVGIASLSLPVYLGET). Topologically, residues 591–596 (VQPEVR) are cytoplasmic. The chain crosses the membrane as a helical span at residues 597-617 (GTLGLLPTAFGNIGILLCFIA). Residues 618–624 (GTYMDWS) are Extracellular-facing. Residues 625-645 (MLAFLGGALPVPFLILMFLIP) form a helical membrane-spanning segment. The Cytoplasmic segment spans residues 646 to 708 (ETPRWYVSRG…ELLKRSNLKP (63 aa)). The helical transmembrane segment at 709 to 729 (LSISLGLMFFQQLSGINAVIF) threads the bilayer. Residues 730-745 (YTVQIFKDAGSTLDGN) are Extracellular-facing. The helical transmembrane segment at 746 to 766 (VCTIIVGTVNFIATFIGILLI) threads the bilayer. Residues 767–772 (DRAGRK) are Cytoplasmic-facing. The chain crosses the membrane as a helical span at residues 773–793 (ILLYVSNIAMILTLFVLGGFF). Topologically, residues 794–804 (YCKANGMDVSN) are extracellular. A helical transmembrane segment spans residues 805–825 (VGLLPLCCFVVYILGFSLGFG). Over 826 to 839 (PIPWLMMGEILPAK) the chain is Cytoplasmic. Residues 840-860 (IRGSAASVATAFNWTCTFVVT) form a helical membrane-spanning segment. The Extracellular portion of the chain corresponds to 861-873 (KSFLDMIKLIGAH). A helical transmembrane segment spans residues 874–894 (GAFWLFGVICCIGMFFVIFCV). The Cytoplasmic portion of the chain corresponds to 895-929 (PETQGKTLEDIERKMMGRVRRMSSVANIKPLSFNM). A phosphoserine mark is found at serine 917 and serine 918.

It belongs to the major facilitator superfamily. Sugar transporter (TC 2.A.1.1) family. Trehalose transporter subfamily.

The protein localises to the cell membrane. Its function is as follows. Low-capacity facilitative transporter for trehalose. Does not transport maltose, sucrose or lactose. Mediates the bidirectional transfer of trehalose. Responsible for the transport of trehalose synthesized in the fat body and the incorporation of trehalose into other tissues that require a carbon source, thereby regulating trehalose levels in the hemolymph. The sequence is that of Facilitated trehalose transporter Tret1 from Drosophila grimshawi (Hawaiian fruit fly).